Here is a 208-residue protein sequence, read N- to C-terminus: Protein GrpE (208 aa).

Residues 1–12 (MTNKDESVEKNT) show a composition bias toward basic and acidic residues. Positions 1–49 (MTNKDESVEKNTESTVEVTNVKQNIDDSVEQTEESKGHLQDEAIEETSD) are disordered. Residues 13–23 (ESTVEVTNVKQ) are compositionally biased toward polar residues.

The protein belongs to the GrpE family. In terms of assembly, homodimer.

Its subcellular location is the cytoplasm. Its function is as follows. Participates actively in the response to hyperosmotic and heat shock by preventing the aggregation of stress-denatured proteins, in association with DnaK and GrpE. It is the nucleotide exchange factor for DnaK and may function as a thermosensor. Unfolded proteins bind initially to DnaJ; upon interaction with the DnaJ-bound protein, DnaK hydrolyzes its bound ATP, resulting in the formation of a stable complex. GrpE releases ADP from DnaK; ATP binding to DnaK triggers the release of the substrate protein, thus completing the reaction cycle. Several rounds of ATP-dependent interactions between DnaJ, DnaK and GrpE are required for fully efficient folding. The protein is Protein GrpE of Staphylococcus aureus (strain bovine RF122 / ET3-1).